A 310-amino-acid polypeptide reads, in one-letter code: ADP-L-glycero-D-manno-heptose-6-epimerase (310 aa).

NADP(+) contacts are provided by residues phenylalanine 10–isoleucine 11, aspartate 31–asparagine 32, lysine 38, lysine 53, glutamate 75–serine 79, and asparagine 92. The active-site Proton acceptor is the tyrosine 140. Lysine 144 is a binding site for NADP(+). Asparagine 169 serves as a coordination point for substrate. The NADP(+) site is built by valine 170 and lysine 178. Lysine 178 functions as the Proton acceptor in the catalytic mechanism. Substrate-binding positions include serine 180, histidine 187, phenylalanine 201–serine 204, arginine 209, and tyrosine 272.

It belongs to the NAD(P)-dependent epimerase/dehydratase family. HldD subfamily. Homopentamer. Requires NADP(+) as cofactor.

The enzyme catalyses ADP-D-glycero-beta-D-manno-heptose = ADP-L-glycero-beta-D-manno-heptose. It functions in the pathway nucleotide-sugar biosynthesis; ADP-L-glycero-beta-D-manno-heptose biosynthesis; ADP-L-glycero-beta-D-manno-heptose from D-glycero-beta-D-manno-heptose 7-phosphate: step 4/4. Its function is as follows. Catalyzes the interconversion between ADP-D-glycero-beta-D-manno-heptose and ADP-L-glycero-beta-D-manno-heptose via an epimerization at carbon 6 of the heptose. This is ADP-L-glycero-D-manno-heptose-6-epimerase from Salmonella paratyphi C (strain RKS4594).